The chain runs to 197 residues: 7-methyl-GTP pyrophosphatase (197 aa).

D69 (proton acceptor) is an active-site residue.

The protein belongs to the Maf family. YceF subfamily. It depends on a divalent metal cation as a cofactor.

Its subcellular location is the cytoplasm. The catalysed reaction is N(7)-methyl-GTP + H2O = N(7)-methyl-GMP + diphosphate + H(+). In terms of biological role, nucleoside triphosphate pyrophosphatase that hydrolyzes 7-methyl-GTP (m(7)GTP). May have a dual role in cell division arrest and in preventing the incorporation of modified nucleotides into cellular nucleic acids. This is 7-methyl-GTP pyrophosphatase from Pectobacterium atrosepticum (strain SCRI 1043 / ATCC BAA-672) (Erwinia carotovora subsp. atroseptica).